The following is a 484-amino-acid chain: Protein nucleotidyltransferase YdiU (484 aa).

Residues Gly-87, Gly-89, Arg-90, Lys-110, Asp-122, Gly-123, Arg-173, and Arg-180 each contribute to the ATP site. Asp-249 functions as the Proton acceptor in the catalytic mechanism. Asn-250 and Asp-259 together coordinate Mg(2+). Asp-259 provides a ligand contact to ATP.

It belongs to the SELO family. It depends on Mg(2+) as a cofactor. Requires Mn(2+) as cofactor.

It catalyses the reaction L-seryl-[protein] + ATP = 3-O-(5'-adenylyl)-L-seryl-[protein] + diphosphate. The catalysed reaction is L-threonyl-[protein] + ATP = 3-O-(5'-adenylyl)-L-threonyl-[protein] + diphosphate. The enzyme catalyses L-tyrosyl-[protein] + ATP = O-(5'-adenylyl)-L-tyrosyl-[protein] + diphosphate. It carries out the reaction L-histidyl-[protein] + UTP = N(tele)-(5'-uridylyl)-L-histidyl-[protein] + diphosphate. It catalyses the reaction L-seryl-[protein] + UTP = O-(5'-uridylyl)-L-seryl-[protein] + diphosphate. The catalysed reaction is L-tyrosyl-[protein] + UTP = O-(5'-uridylyl)-L-tyrosyl-[protein] + diphosphate. Functionally, nucleotidyltransferase involved in the post-translational modification of proteins. It can catalyze the addition of adenosine monophosphate (AMP) or uridine monophosphate (UMP) to a protein, resulting in modifications known as AMPylation and UMPylation. The sequence is that of Protein nucleotidyltransferase YdiU from Lachnoclostridium phytofermentans (strain ATCC 700394 / DSM 18823 / ISDg) (Clostridium phytofermentans).